Here is a 148-residue protein sequence, read N- to C-terminus: Ribonuclease pancreatic (148 aa).

The N-terminal stretch at 1–25 is a signal peptide; that stretch reads MGLEKSLMLFPLLVLVLGLVQPSLG. Residues Lys32 and Arg35 each contribute to the substrate site. The active-site Proton acceptor is His37. 4 cysteine pairs are disulfide-bonded: Cys50-Cys108, Cys64-Cys119, Cys82-Cys134, and Cys89-Cys96. Substrate is bound by residues 65–69, Lys90, and Arg109; that span reads KPVNT. The active-site Proton donor is the His143.

It belongs to the pancreatic ribonuclease family. Monomer. Interacts with and forms tight 1:1 complexes with RNH1. Dimerization of two such complexes may occur. Interaction with RNH1 inhibits this protein. Pancreas.

The protein resides in the secreted. It catalyses the reaction an [RNA] containing cytidine + H2O = an [RNA]-3'-cytidine-3'-phosphate + a 5'-hydroxy-ribonucleotide-3'-[RNA].. The enzyme catalyses an [RNA] containing uridine + H2O = an [RNA]-3'-uridine-3'-phosphate + a 5'-hydroxy-ribonucleotide-3'-[RNA].. Endonuclease that catalyzes the cleavage of RNA on the 3' side of pyrimidine nucleotides. Acts on single-stranded and double-stranded RNA. This chain is Ribonuclease pancreatic (RNASE1), found in Gerbilliscus gambianus (Gambian gerbil).